The chain runs to 414 residues: DNA primase small subunit PriS (414 aa).

Active-site residues include Asp-98, Asp-100, and Asp-312.

It belongs to the eukaryotic-type primase small subunit family. Heterodimer of a small subunit (PriS) and a large subunit (PriL). The cofactor is Mg(2+). Mn(2+) is required as a cofactor.

Functionally, catalytic subunit of DNA primase, an RNA polymerase that catalyzes the synthesis of short RNA molecules used as primers for DNA polymerase during DNA replication. The small subunit contains the primase catalytic core and has DNA synthesis activity on its own. Binding to the large subunit stabilizes and modulates the activity, increasing the rate of DNA synthesis while decreasing the length of the DNA fragments, and conferring RNA synthesis capability. The DNA polymerase activity may enable DNA primase to also catalyze primer extension after primer synthesis. May also play a role in DNA repair. The sequence is that of DNA primase small subunit PriS from Methanosarcina barkeri (strain Fusaro / DSM 804).